Consider the following 153-residue polypeptide: Large ribosomal subunit protein uL15 (153 aa).

Positions 1–49 are disordered; the sequence is MQLHNLYPFPEERKTRRRVGRGSGSGLGCTAGKGHKGQNARAGGGVAPG. The segment covering 21–31 has biased composition (gly residues); sequence RGSGSGLGCTA.

Belongs to the universal ribosomal protein uL15 family. In terms of assembly, part of the 50S ribosomal subunit.

Its function is as follows. Binds to the 23S rRNA. The sequence is that of Large ribosomal subunit protein uL15 from Desulfovibrio desulfuricans (strain ATCC 27774 / DSM 6949 / MB).